The primary structure comprises 116 residues: Selenoprotein H (116 aa).

K20 is subject to N6-acetyllysine. The segment at residues 35 to 38 (CTSU) is a cross-link (cysteinyl-selenocysteine (Cys-Sec); redox-active). Residue U38 is a non-standard amino acid, selenocysteine.

Belongs to the SelWTH family.

Its function is as follows. May be involved in a redox-related process. This is Selenoprotein H from Mus musculus (Mouse).